The chain runs to 88 residues: Small ribosomal subunit protein bS16 (88 aa).

The protein belongs to the bacterial ribosomal protein bS16 family.

This is Small ribosomal subunit protein bS16 from Leptospira borgpetersenii serovar Hardjo-bovis (strain L550).